The sequence spans 398 residues: Argininosuccinate synthase (398 aa).

Residues 9–17 and alanine 37 each bind ATP; that span reads AYSGGVDTS. Tyrosine 88 is a binding site for L-citrulline. Glycine 118 is a binding site for ATP. Residues threonine 120, asparagine 124, and aspartate 125 each contribute to the L-aspartate site. Asparagine 124 is a binding site for L-citrulline. Positions 128, 176, 185, 261, and 273 each coordinate L-citrulline.

This sequence belongs to the argininosuccinate synthase family. Type 1 subfamily. Homotetramer.

It is found in the cytoplasm. It carries out the reaction L-citrulline + L-aspartate + ATP = 2-(N(omega)-L-arginino)succinate + AMP + diphosphate + H(+). Its pathway is amino-acid biosynthesis; L-arginine biosynthesis; L-arginine from L-ornithine and carbamoyl phosphate: step 2/3. This is Argininosuccinate synthase from Gloeobacter violaceus (strain ATCC 29082 / PCC 7421).